The sequence spans 282 residues: Protein MGF 505-3R (282 aa).

It belongs to the asfivirus MGF 505 family.

Plays a role in virus cell tropism, and may be required for efficient virus replication in macrophages. This Ornithodoros (relapsing fever ticks) protein is Protein MGF 505-3R.